Reading from the N-terminus, the 250-residue chain is Histone H1.3 (250 aa).

Disordered regions lie at residues Ala17–Asp53 and Gln104–Lys250. A compositionally biased stretch (low complexity) spans Lys27–Pro42. Positions Ser44 to Arg118 constitute an H15 domain. A compositionally biased stretch (basic and acidic residues) spans Ala120–Lys133. Residues Val138–Ala161 show a composition bias toward low complexity. A compositionally biased stretch (basic and acidic residues) spans Lys174–Lys191. The segment covering Thr192–Lys234 has biased composition (low complexity). Residues Thr235–Lys250 are compositionally biased toward basic residues.

The protein belongs to the histone H1/H5 family.

It is found in the nucleus. The protein localises to the chromosome. Functionally, histones H1 are necessary for the condensation of nucleosome chains into higher-order structures. The polypeptide is Histone H1.3 (His1.3) (Drosophila virilis (Fruit fly)).